A 155-amino-acid polypeptide reads, in one-letter code: Small ribosomal subunit protein uS7 (155 aa).

It belongs to the universal ribosomal protein uS7 family. In terms of assembly, part of the 30S ribosomal subunit. Contacts proteins S9 and S11.

One of the primary rRNA binding proteins, it binds directly to 16S rRNA where it nucleates assembly of the head domain of the 30S subunit. Is located at the subunit interface close to the decoding center, probably blocks exit of the E-site tRNA. The chain is Small ribosomal subunit protein uS7 from Corynebacterium diphtheriae (strain ATCC 700971 / NCTC 13129 / Biotype gravis).